The sequence spans 320 residues: Aspartate carbamoyltransferase catalytic subunit (320 aa).

Positions 70 and 71 each coordinate carbamoyl phosphate. K98 is an L-aspartate binding site. Carbamoyl phosphate contacts are provided by R120, H149, and Q152. Residues R182 and R237 each contribute to the L-aspartate site. Residues G278 and P279 each coordinate carbamoyl phosphate.

Belongs to the aspartate/ornithine carbamoyltransferase superfamily. ATCase family. In terms of assembly, heterododecamer (2C3:3R2) of six catalytic PyrB chains organized as two trimers (C3), and six regulatory PyrI chains organized as three dimers (R2).

The catalysed reaction is carbamoyl phosphate + L-aspartate = N-carbamoyl-L-aspartate + phosphate + H(+). It participates in pyrimidine metabolism; UMP biosynthesis via de novo pathway; (S)-dihydroorotate from bicarbonate: step 2/3. Functionally, catalyzes the condensation of carbamoyl phosphate and aspartate to form carbamoyl aspartate and inorganic phosphate, the committed step in the de novo pyrimidine nucleotide biosynthesis pathway. In Vesicomyosocius okutanii subsp. Calyptogena okutanii (strain HA), this protein is Aspartate carbamoyltransferase catalytic subunit.